Reading from the N-terminus, the 350-residue chain is MELLESALAKIQPVDEALLTEAQAKLDNKTKPPGSLGLLEEMARRFAAITGDLSPKMGKKVIFTFAGDHGIVEEGVSLFPKEVTPQMVLNFLRGGAGVNVLARHAGAEVRVVDVGVDYDFEPTEGLIIRKIAKGTRNFAKESAMTREEAVAAIEVGIALADRAKAEGISMVGTGEMGIGNTSPSSAIIAAFAGCSVREVTHRGTGIGDQALEHKIKVIQAGLDLNRPNPEDPLDVLSKVGGLEIAGIAGLVLGAAANRIPVVVDGFISTAGALIACEMHPNVREYIFAAHNSVEIGHQMMLQRIGAKPILDLQLRLGEGTGAALAMGLIEAGVKVLNEMATFEEAGVASS.

Catalysis depends on E318, which acts as the Proton acceptor.

It belongs to the CobT family.

It carries out the reaction 5,6-dimethylbenzimidazole + nicotinate beta-D-ribonucleotide = alpha-ribazole 5'-phosphate + nicotinate + H(+). The protein operates within nucleoside biosynthesis; alpha-ribazole biosynthesis; alpha-ribazole from 5,6-dimethylbenzimidazole: step 1/2. Its function is as follows. Catalyzes the synthesis of alpha-ribazole-5'-phosphate from nicotinate mononucleotide (NAMN) and 5,6-dimethylbenzimidazole (DMB). This is Nicotinate-nucleotide--dimethylbenzimidazole phosphoribosyltransferase from Citrifermentans bemidjiense (strain ATCC BAA-1014 / DSM 16622 / JCM 12645 / Bem) (Geobacter bemidjiensis).